Here is a 450-residue protein sequence, read N- to C-terminus: Probable malate:quinone oxidoreductase (450 aa).

It belongs to the MQO family. The cofactor is FAD.

It carries out the reaction (S)-malate + a quinone = a quinol + oxaloacetate. It functions in the pathway carbohydrate metabolism; tricarboxylic acid cycle; oxaloacetate from (S)-malate (quinone route): step 1/1. This chain is Probable malate:quinone oxidoreductase, found in Helicobacter acinonychis (strain Sheeba).